Reading from the N-terminus, the 656-residue chain is Spermatogenesis-associated protein 13 (656 aa).

The segment covering 1-12 (MHPASVTTTSQD) has biased composition (polar residues). The interval 1 to 26 (MHPASVTTTSQDPCAPSGSCRGGRRR) is disordered. Position 82 is a phosphoserine (Ser82). The disordered stretch occupies residues 85-115 (IGLDRVGRRRQMKTSNVSSDGGAESSALVDD). The segment at 102 to 154 (SSDGGAESSALVDDNGSEEDFSYEELCQANPRYLQPGGEQLAINELISDGSVV) is ABR (APC-binding region) domain. At Ser118 the chain carries Phosphoserine. In terms of domain architecture, SH3 spans 151-210 (GSVVCAEALWDHVTMDDQELGFKAGDVIQVLEASNKDWWWGRNEDKEAWFPASFVRLRVN). Residues 215-242 (PENCSSSHGEEQDEDTSKARHKHPESQQ) are disordered. Positions 244-428 (MRTNVIQEIM…KNVACLINER (185 aa)) constitute a DH domain. The 107-residue stretch at 459–565 (ELIHSGELTK…WLQAYADERR (107 aa)) folds into the PH domain. Residues 565 to 656 (RRVQEDQQMG…TFHKLTPFRK (92 aa)) are C-terminal tail.

As to quaternary structure, interacts (via ABR and SH3 domain) with APC. The binding of APC enhances its GEF activity by relieving it from an autoinhibitory conformation, in which the ABR and SH3 domains are associated with the C-terminal tail. Interacts (via C-terminal tail) with PPP1R9B (via C-terminus). Interacts with RAC1. Expression is aberrantly enhanced in most colorectal tumors.

The protein resides in the cytoplasm. The protein localises to the cell projection. Its subcellular location is the filopodium. It localises to the lamellipodium. It is found in the ruffle membrane. The protein resides in the podosome. Both the ABR and the SH3 domains contribute to maintaining the protein in an inhibited conformation by associating with the C-terminal tail. Binding of these domains to the C-terminal tail inhibits the activity of the protein by blocking a region that is required for its GEF activity. Functionally, acts as a guanine nucleotide exchange factor (GEF) for RHOA, RAC1 and CDC42 GTPases. Regulates cell migration and adhesion assembly and disassembly through a RAC1, PI3K, RHOA and AKT1-dependent mechanism. Increases both RAC1 and CDC42 activity, but decreases the amount of active RHOA. Required for MMP9 up-regulation via the JNK signaling pathway in colorectal tumor cells. Involved in tumor angiogenesis and may play a role in intestinal adenoma formation and tumor progression. The chain is Spermatogenesis-associated protein 13 (Spata13) from Mus musculus (Mouse).